The following is a 506-amino-acid chain: 2-isopropylmalate synthase (506 aa).

A Pyruvate carboxyltransferase domain is found at 4–266; that stretch reads ILFMDTTLRD…EPSMTLKEIK (263 aa). Positions 13, 201, 203, and 237 each coordinate Mn(2+). The interval 390–506 is regulatory domain; that stretch reads NITQLQVHFV…KLKSFIQLVK (117 aa).

Belongs to the alpha-IPM synthase/homocitrate synthase family. LeuA type 1 subfamily. As to quaternary structure, homodimer. The cofactor is Mn(2+).

The protein resides in the cytoplasm. The enzyme catalyses 3-methyl-2-oxobutanoate + acetyl-CoA + H2O = (2S)-2-isopropylmalate + CoA + H(+). Its pathway is amino-acid biosynthesis; L-leucine biosynthesis; L-leucine from 3-methyl-2-oxobutanoate: step 1/4. Catalyzes the condensation of the acetyl group of acetyl-CoA with 3-methyl-2-oxobutanoate (2-ketoisovalerate) to form 3-carboxy-3-hydroxy-4-methylpentanoate (2-isopropylmalate). The chain is 2-isopropylmalate synthase from Bacillus anthracis (strain A0248).